A 506-amino-acid polypeptide reads, in one-letter code: ATP synthase subunit alpha (506 aa).

169 to 176 is a binding site for ATP; the sequence is GDRQTGKT.

This sequence belongs to the ATPase alpha/beta chains family. In terms of assembly, F-type ATPases have 2 components, CF(1) - the catalytic core - and CF(0) - the membrane proton channel. CF(1) has five subunits: alpha(3), beta(3), gamma(1), delta(1), epsilon(1). CF(0) has three main subunits: a(1), b(2) and c(9-12). The alpha and beta chains form an alternating ring which encloses part of the gamma chain. CF(1) is attached to CF(0) by a central stalk formed by the gamma and epsilon chains, while a peripheral stalk is formed by the delta and b chains.

The protein resides in the cell membrane. It catalyses the reaction ATP + H2O + 4 H(+)(in) = ADP + phosphate + 5 H(+)(out). In terms of biological role, produces ATP from ADP in the presence of a proton gradient across the membrane. The alpha chain is a regulatory subunit. This chain is ATP synthase subunit alpha, found in Acetivibrio thermocellus (strain ATCC 27405 / DSM 1237 / JCM 9322 / NBRC 103400 / NCIMB 10682 / NRRL B-4536 / VPI 7372) (Clostridium thermocellum).